Reading from the N-terminus, the 672-residue chain is Transcription factor tau 91 kDa subunit (672 aa).

The interval 1-158 (MAVIPAKKRG…SLGQKGRPIR (158 aa)) is required for DNA-binding. Positions 6-18 (AKKRGRPRKSVVA) form a DNA-binding region, a.T hook. Disordered regions lie at residues 24–45 (SLAS…ASKK) and 67–156 (VNNV…KGRP). Residues 71–100 (DDTDDDDFVLNDEGDGEESDNVEIEFENEL) show a composition bias toward acidic residues. Residues 159–672 (LLKDLSSARD…AGLLTLEYLS (514 aa)) are sufficient for interaction with TFC8. Cysteines 375 and 383 form a disulfide.

As to quaternary structure, heterodimer with TFC8. Component of the TFIIIC complex composed of TFC1, TFC3, TFC4, TFC6, TFC7 and TFC8. The subunits are organized in two globular domains, tauA and tauB, connected by a proteolysis-sensitive and flexible linker. Interacts with TFC1, TFC3, TFC4 and directly with TFC8.

It localises to the nucleus. TFIIIC mediates tRNA and 5S RNA gene activation by binding to intragenic promoter elements. Upstream of the transcription start site, TFIIIC assembles the initiation complex TFIIIB-TFIIIC-tDNA, which is sufficient for RNA polymerase III recruitment and function. Part of the tauB domain of TFIIIC that binds boxB DNA promoter sites of tRNA and similar genes. Cooperates with TFC3 in DNA binding. This chain is Transcription factor tau 91 kDa subunit (TFC6), found in Saccharomyces cerevisiae (strain ATCC 204508 / S288c) (Baker's yeast).